The chain runs to 132 residues: ATP synthase epsilon chain (132 aa).

This sequence belongs to the ATPase epsilon chain family. As to quaternary structure, F-type ATPases have 2 components, CF(1) - the catalytic core - and CF(0) - the membrane proton channel. CF(1) has five subunits: alpha(3), beta(3), gamma(1), delta(1), epsilon(1). CF(0) has three main subunits: a, b and c.

It is found in the cell inner membrane. Its function is as follows. Produces ATP from ADP in the presence of a proton gradient across the membrane. In Anaeromyxobacter sp. (strain K), this protein is ATP synthase epsilon chain.